A 139-amino-acid chain; its full sequence is ATP synthase epsilon chain (139 aa).

It belongs to the ATPase epsilon chain family. F-type ATPases have 2 components, CF(1) - the catalytic core - and CF(0) - the membrane proton channel. CF(1) has five subunits: alpha(3), beta(3), gamma(1), delta(1), epsilon(1). CF(0) has three main subunits: a, b and c.

The protein resides in the cell inner membrane. Its function is as follows. Produces ATP from ADP in the presence of a proton gradient across the membrane. This chain is ATP synthase epsilon chain, found in Pseudomonas putida (strain W619).